Consider the following 124-residue polypeptide: Ragulator complex protein LAMTOR3 (124 aa).

Positions T57 to S70 are required for interaction with LAMTOR2.

The protein belongs to the LAMTOR3 family. In terms of assembly, part of the Ragulator complex composed of LAMTOR1, LAMTOR2, LAMTOR3, LAMTOR4 and LAMTOR5. LAMTOR4 and LAMTOR5 form a heterodimer that interacts, through LAMTOR1, with a LAMTOR2, LAMTOR3 heterodimer. The Ragulator complex interacts with both the mTORC1 complex and heterodimers constituted of the Rag GTPases RagA/RRAGA, RagB/RRAGB, RagC/RRAGC and RagD/RRAGD; regulated by amino acid availability. The Ragulator complex interacts with SLC38A9; the probable amino acid sensor. Interacts with LAMTOR1 and LAMTOR2; the interaction is direct. Component of the lysosomal folliculin complex (LFC), composed of FLCN, FNIP1 (or FNIP2), RagA/RRAGA or RagB/RRAGB GDP-bound, RagC/RRAGC or RagD/RRAGD GTP-bound, and Ragulator. Interacts with MAP2K1/MEK1 and MAPK2. Interacts with MORG1.

The protein resides in the late endosome membrane. Its function is as follows. As part of the Ragulator complex it is involved in amino acid sensing and activation of mTORC1, a signaling complex promoting cell growth in response to growth factors, energy levels, and amino acids. Activated by amino acids through a mechanism involving the lysosomal V-ATPase, the Ragulator plays a dual role for the small GTPases Rag (RagA/RRAGA, RagB/RRAGB, RagC/RRAGC and/or RagD/RRAGD): it (1) acts as a guanine nucleotide exchange factor (GEF), activating the small GTPases Rag and (2) mediates recruitment of Rag GTPases to the lysosome membrane. Activated Ragulator and Rag GTPases function as a scaffold recruiting mTORC1 to lysosomes where it is in turn activated. Adapter protein that enhances the efficiency of the MAP kinase cascade facilitating the activation of MAPK2. This is Ragulator complex protein LAMTOR3 (Lamtor3) from Mus musculus (Mouse).